The primary structure comprises 592 residues: Aspartate--tRNA ligase (592 aa).

Glutamate 173 provides a ligand contact to L-aspartate. Residues 197–200 form an aspartate region; that stretch reads QLFK. Residue arginine 219 participates in L-aspartate binding. Residues 219-221 and glutamine 228 each bind ATP; that span reads RDE. Histidine 448 contributes to the L-aspartate binding site. Residue glutamate 482 participates in ATP binding. Arginine 489 is a binding site for L-aspartate. Residue 534-537 coordinates ATP; that stretch reads GLDR.

This sequence belongs to the class-II aminoacyl-tRNA synthetase family. Type 1 subfamily. Homodimer.

It is found in the cytoplasm. It catalyses the reaction tRNA(Asp) + L-aspartate + ATP = L-aspartyl-tRNA(Asp) + AMP + diphosphate. Catalyzes the attachment of L-aspartate to tRNA(Asp) in a two-step reaction: L-aspartate is first activated by ATP to form Asp-AMP and then transferred to the acceptor end of tRNA(Asp). In Shewanella putrefaciens (strain CN-32 / ATCC BAA-453), this protein is Aspartate--tRNA ligase.